The following is a 106-amino-acid chain: UPF0145 protein CLH_2273 (106 aa).

This sequence belongs to the UPF0145 family.

This Clostridium botulinum (strain Alaska E43 / Type E3) protein is UPF0145 protein CLH_2273.